A 403-amino-acid polypeptide reads, in one-letter code: Histidine--tRNA ligase (403 aa).

The protein belongs to the class-II aminoacyl-tRNA synthetase family. Homodimer.

It is found in the cytoplasm. The enzyme catalyses tRNA(His) + L-histidine + ATP = L-histidyl-tRNA(His) + AMP + diphosphate + H(+). In Sulfurimonas denitrificans (strain ATCC 33889 / DSM 1251) (Thiomicrospira denitrificans (strain ATCC 33889 / DSM 1251)), this protein is Histidine--tRNA ligase.